The sequence spans 357 residues: Sulfate/thiosulfate import ATP-binding protein CysA (357 aa).

One can recognise an ABC transporter domain in the interval 3–237; sequence IQIQGVSKQY…PASPFVYDFL (235 aa). 35 to 42 provides a ligand contact to ATP; the sequence is GPSGSGKT.

Belongs to the ABC transporter superfamily. Sulfate/tungstate importer (TC 3.A.1.6) family. In terms of assembly, the complex is composed of two ATP-binding proteins (CysA), two transmembrane proteins (CysT and CysW) and a solute-binding protein (CysP).

It is found in the cell membrane. It catalyses the reaction sulfate(out) + ATP + H2O = sulfate(in) + ADP + phosphate + H(+). The catalysed reaction is thiosulfate(out) + ATP + H2O = thiosulfate(in) + ADP + phosphate + H(+). Its function is as follows. Part of the ABC transporter complex CysAWTP involved in sulfate/thiosulfate import. Responsible for energy coupling to the transport system. The polypeptide is Sulfate/thiosulfate import ATP-binding protein CysA (Bacillus cereus (strain ATCC 14579 / DSM 31 / CCUG 7414 / JCM 2152 / NBRC 15305 / NCIMB 9373 / NCTC 2599 / NRRL B-3711)).